We begin with the raw amino-acid sequence, 549 residues long: Glucose-6-phosphate isomerase (549 aa).

Glu-353 (proton donor) is an active-site residue. Catalysis depends on residues His-384 and Lys-510. Positions 523–549 (AEPPAAQSDSSTDALVRRYRSERGRTA) are disordered. Positions 537–549 (LVRRYRSERGRTA) are enriched in basic and acidic residues.

This sequence belongs to the GPI family.

The protein localises to the cytoplasm. The catalysed reaction is alpha-D-glucose 6-phosphate = beta-D-fructose 6-phosphate. It functions in the pathway carbohydrate biosynthesis; gluconeogenesis. The protein operates within carbohydrate degradation; glycolysis; D-glyceraldehyde 3-phosphate and glycerone phosphate from D-glucose: step 2/4. Its function is as follows. Catalyzes the reversible isomerization of glucose-6-phosphate to fructose-6-phosphate. The protein is Glucose-6-phosphate isomerase of Mycolicibacterium gilvum (strain PYR-GCK) (Mycobacterium gilvum (strain PYR-GCK)).